We begin with the raw amino-acid sequence, 403 residues long: Phosphoglycerate kinase (403 aa).

Substrate is bound by residues 24 to 26, Arg39, 62 to 65, Arg121, and Arg161; these read DLN and HLGR. ATP-binding positions include Lys211, Gly299, Glu330, and 359-362; that span reads GGDS.

This sequence belongs to the phosphoglycerate kinase family. Monomer.

The protein localises to the cytoplasm. It catalyses the reaction (2R)-3-phosphoglycerate + ATP = (2R)-3-phospho-glyceroyl phosphate + ADP. The protein operates within carbohydrate degradation; glycolysis; pyruvate from D-glyceraldehyde 3-phosphate: step 2/5. The chain is Phosphoglycerate kinase from Rhodococcus erythropolis (strain PR4 / NBRC 100887).